Here is a 394-residue protein sequence, read N- to C-terminus: Glutamyl-tRNA reductase (394 aa).

Residues 45–48 (TCNR), Ser-99, 104–106 (EEQ), and Gln-110 each bind substrate. Cys-46 (nucleophile) is an active-site residue. 175 to 180 (GLGNIG) lines the NADP(+) pocket.

Belongs to the glutamyl-tRNA reductase family. As to quaternary structure, homodimer.

It carries out the reaction (S)-4-amino-5-oxopentanoate + tRNA(Glu) + NADP(+) = L-glutamyl-tRNA(Glu) + NADPH + H(+). The protein operates within porphyrin-containing compound metabolism; protoporphyrin-IX biosynthesis; 5-aminolevulinate from L-glutamyl-tRNA(Glu): step 1/2. Functionally, catalyzes the NADPH-dependent reduction of glutamyl-tRNA(Glu) to glutamate 1-semialdehyde (GSA). This chain is Glutamyl-tRNA reductase, found in Caldicellulosiruptor saccharolyticus (strain ATCC 43494 / DSM 8903 / Tp8T 6331).